Here is a 294-residue protein sequence, read N- to C-terminus: Cytidine deaminase (294 aa).

2 CMP/dCMP-type deaminase domains span residues D48–K168 and L186–G294. Substrate is bound at residue N89–E91. H102 serves as a coordination point for Zn(2+). E104 acts as the Proton donor in catalysis. The Zn(2+) site is built by C129 and C132.

The protein belongs to the cytidine and deoxycytidylate deaminase family. As to quaternary structure, homodimer. Requires Zn(2+) as cofactor.

The enzyme catalyses cytidine + H2O + H(+) = uridine + NH4(+). It catalyses the reaction 2'-deoxycytidine + H2O + H(+) = 2'-deoxyuridine + NH4(+). In terms of biological role, this enzyme scavenges exogenous and endogenous cytidine and 2'-deoxycytidine for UMP synthesis. In Salmonella schwarzengrund (strain CVM19633), this protein is Cytidine deaminase.